The following is a 299-amino-acid chain: 4-diphosphocytidyl-2-C-methyl-D-erythritol kinase (299 aa).

Lys-19 is a catalytic residue. ATP is bound at residue 110–120 (PVASGIGGGSA). Asp-152 is a catalytic residue.

The protein belongs to the GHMP kinase family. IspE subfamily.

The catalysed reaction is 4-CDP-2-C-methyl-D-erythritol + ATP = 4-CDP-2-C-methyl-D-erythritol 2-phosphate + ADP + H(+). The protein operates within isoprenoid biosynthesis; isopentenyl diphosphate biosynthesis via DXP pathway; isopentenyl diphosphate from 1-deoxy-D-xylulose 5-phosphate: step 3/6. Its function is as follows. Catalyzes the phosphorylation of the position 2 hydroxy group of 4-diphosphocytidyl-2C-methyl-D-erythritol. The protein is 4-diphosphocytidyl-2-C-methyl-D-erythritol kinase of Agrobacterium fabrum (strain C58 / ATCC 33970) (Agrobacterium tumefaciens (strain C58)).